The primary structure comprises 65 residues: Small ribosomal subunit protein eS27 (65 aa).

4 residues coordinate Zn(2+): Cys-20, Cys-23, Cys-39, and Cys-42. The C4-type zinc finger occupies 20-42 (CIDCGNEQIVFSHPATPVRCLVC).

The protein belongs to the eukaryotic ribosomal protein eS27 family. In terms of assembly, part of the 30S ribosomal subunit. Requires Zn(2+) as cofactor.

The polypeptide is Small ribosomal subunit protein eS27 (Thermococcus kodakarensis (strain ATCC BAA-918 / JCM 12380 / KOD1) (Pyrococcus kodakaraensis (strain KOD1))).